The sequence spans 92 residues: Large ribosomal subunit protein eL43 (92 aa).

Zn(2+) contacts are provided by cysteine 39, cysteine 42, cysteine 57, and cysteine 60. The C4-type zinc-finger motif lies at 39–60 (CPNCGEDRVDRQGTGIWQCSYC).

The protein belongs to the eukaryotic ribosomal protein eL43 family. Putative zinc-binding subfamily. Part of the 50S ribosomal subunit. Contacts protein L2. Zn(2+) serves as cofactor.

Its function is as follows. Binds to the 23S rRNA. In Haloarcula marismortui (strain ATCC 43049 / DSM 3752 / JCM 8966 / VKM B-1809) (Halobacterium marismortui), this protein is Large ribosomal subunit protein eL43.